Consider the following 201-residue polypeptide: Recombination protein RecR (201 aa).

A C4-type zinc finger spans residues Cys-60–Cys-75. Positions Arg-83–Pro-178 constitute a Toprim domain.

It belongs to the RecR family.

Its function is as follows. May play a role in DNA repair. It seems to be involved in an RecBC-independent recombinational process of DNA repair. It may act with RecF and RecO. In Xanthobacter autotrophicus (strain ATCC BAA-1158 / Py2), this protein is Recombination protein RecR.